We begin with the raw amino-acid sequence, 426 residues long: Dihydroorotase (426 aa).

Zn(2+) is bound by residues His-61 and His-63. Residues 63-65 (HCR) and Asn-95 each bind substrate. Positions 146, 180, 229, and 297 each coordinate Zn(2+). Asp-297 is an active-site residue. His-301 contributes to the substrate binding site.

The protein belongs to the metallo-dependent hydrolases superfamily. DHOase family. Class I DHOase subfamily. It depends on Zn(2+) as a cofactor.

It carries out the reaction (S)-dihydroorotate + H2O = N-carbamoyl-L-aspartate + H(+). Its pathway is pyrimidine metabolism; UMP biosynthesis via de novo pathway; (S)-dihydroorotate from bicarbonate: step 3/3. Catalyzes the reversible cyclization of carbamoyl aspartate to dihydroorotate. The sequence is that of Dihydroorotase from Methanopyrus kandleri (strain AV19 / DSM 6324 / JCM 9639 / NBRC 100938).